Consider the following 141-residue polypeptide: Large ribosomal subunit protein uL11 (141 aa).

This sequence belongs to the universal ribosomal protein uL11 family. As to quaternary structure, part of the ribosomal stalk of the 50S ribosomal subunit. Interacts with L10 and the large rRNA to form the base of the stalk. L10 forms an elongated spine to which L12 dimers bind in a sequential fashion forming a multimeric L10(L12)X complex. One or more lysine residues are methylated.

Its function is as follows. Forms part of the ribosomal stalk which helps the ribosome interact with GTP-bound translation factors. The sequence is that of Large ribosomal subunit protein uL11 from Herpetosiphon aurantiacus (strain ATCC 23779 / DSM 785 / 114-95).